The sequence spans 276 residues: Halorhodopsin (276 aa).

Positions 1-20 are excised as a propeptide; sequence MTAASTTATTVLQATQSDVL. Gln-21 carries the post-translational modification Pyrrolidone carboxylic acid. 7 helical membrane passes run 31–51, 61–81, 109–129, 134–154, 162–182, 195–215, and 220–240; these read SSIW…VAMG, LIWV…AGLA, YLTW…LADT, LFTA…AALI, WVFY…LLVQ, IFGT…ILWA, and GVAL…DILA. Lys-241 carries the N6-(retinylidene)lysine modification.

It belongs to the archaeal/bacterial/fungal opsin family. Post-translationally, the covalent binding of retinal to the apoprotein, bacterioopsin, generates bacteriorhodopsin.

Its subcellular location is the membrane. In terms of biological role, light-driven chloride pump. The protein is Halorhodopsin (hop) of Haloarcula marismortui (strain ATCC 43049 / DSM 3752 / JCM 8966 / VKM B-1809) (Halobacterium marismortui).